A 650-amino-acid chain; its full sequence is MFISSMNPVKKNNSGGILSRIQFPEDIRMLDIGDLTLLASDIRSAIIETVSRTGGHLASSLGTVELTLAVHKVFDTPKDRVIWDVGHQAYAHKLITGRRDVFSTLRQKGGISGFPKREESPYDVFNVGHSSTSISAASGIAEARDLKKERFKVVAIIGDGSMTAGLAFEGLNWSGDRKKDLVIILNDNEMSISPNVGALSSYLNHIMTGQTANKIRKDIRNFLKTIPSIGEQVLEFSRRAEESLKALIVPGALFEDLGFTYVGPLEGHRLDHLIRNLEDVRNMEGPVLVHVITRKGKGYKFAEAEPLRFHGICPFSPETGKPAAASESPVPPSYTQVFGNTIVKLARQNPRLVAITAAMCEGTGLNAFAEEFPERFFDVGIAEQHSVTFAAGLATEGILPVVAIYSSFLQRAYDQILHDVCLQNLPVVFALDRAGFVGEDGPTHHGLFDLSYLRSIPNMVVMAPKDENELQHMLHTAVACGKPAAVRYPRGSGVGVTMDSQPFSLELGKGEVLCEGGSLAILAVGDPVHPALTAAVQLREEGIYATVVNARFVKPLDRELLLRIVRSFKKILTVEENVLTGGFGSAILEFLEENDIHGIQVKRLGIRDEFAEQATQAEQRRLYGIDEQGIAAAVRSMMNMGRSSQMEACL.

Thiamine diphosphate is bound by residues histidine 87 and glycine 128–serine 130. Position 159 (aspartate 159) interacts with Mg(2+). Residues glycine 160–serine 161, asparagine 188, tyrosine 299, and glutamate 383 each bind thiamine diphosphate. Asparagine 188 is a Mg(2+) binding site.

The protein belongs to the transketolase family. DXPS subfamily. In terms of assembly, homodimer. The cofactor is Mg(2+). Thiamine diphosphate serves as cofactor.

The catalysed reaction is D-glyceraldehyde 3-phosphate + pyruvate + H(+) = 1-deoxy-D-xylulose 5-phosphate + CO2. It participates in metabolic intermediate biosynthesis; 1-deoxy-D-xylulose 5-phosphate biosynthesis; 1-deoxy-D-xylulose 5-phosphate from D-glyceraldehyde 3-phosphate and pyruvate: step 1/1. Catalyzes the acyloin condensation reaction between C atoms 2 and 3 of pyruvate and glyceraldehyde 3-phosphate to yield 1-deoxy-D-xylulose-5-phosphate (DXP). This chain is 1-deoxy-D-xylulose-5-phosphate synthase, found in Syntrophus aciditrophicus (strain SB).